Consider the following 293-residue polypeptide: Ribonuclease HII (293 aa).

In terms of domain architecture, RNase H type-2 spans 81 to 271 (THIAGVDEAG…VREALGLPTG (191 aa)). A divalent metal cation is bound by residues D87, E88, and D180. A disordered region spans residues 273 to 293 (PPSALQAELFPEAPSRTGVKS).

This sequence belongs to the RNase HII family. It depends on Mn(2+) as a cofactor. Mg(2+) is required as a cofactor.

It localises to the cytoplasm. The enzyme catalyses Endonucleolytic cleavage to 5'-phosphomonoester.. Its function is as follows. Endonuclease that specifically degrades the RNA of RNA-DNA hybrids. The chain is Ribonuclease HII from Myxococcus xanthus (strain DK1622).